A 327-amino-acid chain; its full sequence is MKKTLGIILSISLAFSVLALPIFAAVDTTTSATVEAATPAAPATPAATAPAAAPSVDTSKIAAGTYYTVVSGDFFWQIAAKHGLTIDALAKLNPQIKNVNLIFPGQKILVKAEEAAAASTSTSTAAVAPAAKKLYQGIGMAANYRDNTARQKDHDNLNITTVAALFDDAGKIVKLQFDVVEILPDMFPGWMDPEAADKSFYKDAQANGFNWETKKEEGDAYGMKASAVSGKEWWEQMNFYEEYFKGKTVAEVQDWFAKYCDANGRPYKMAYPEKLTDADKAKVATFTEAEKKMLVDVTTGATMSLQDPHSRFIDALVKAYEVRKEVK.

The signal sequence occupies residues 1–24 (MKKTLGIILSISLAFSVLALPIFA). Positions 65–110 (TYYTVVSGDFFWQIAAKHGLTIDALAKLNPQIKNVNLIFPGQKILV) constitute a LysM domain.

Requires cob(I)alamin as cofactor.

It localises to the secreted. It is found in the cell wall. The protein localises to the cell membrane. Its activity is regulated as follows. Inhibited by sulfide and to a lesser extent by nitrite. Its function is as follows. Reductive dechlorination of ortho-chlorophenols. Dechlorinates in the ortho position with respect to the hydroxyl group. The sequence is that of Chlorophenol reductase from Desulfitobacterium hafniense (Desulfitobacterium frappieri).